The chain runs to 1205 residues: A disintegrin and metalloproteinase with thrombospondin motifs 2 (1205 aa).

The N-terminal stretch at 1–28 (MDPPAGAAGRLLCPALLLLLLLPLPADA) is a signal peptide. Positions 29–253 (RLAAAAADPP…VNSSRRRMRR (225 aa)) are excised as a propeptide. Residues asparagine 104 and asparagine 245 are each glycosylated (N-linked (GlcNAc...) asparagine). Residues 260–464 (YNIEVLLGVD…HSYDCLRDDP (205 aa)) form the Peptidase M12B domain. Intrachain disulfides connect cysteine 337–cysteine 386, cysteine 380–cysteine 459, cysteine 419–cysteine 445, cysteine 486–cysteine 511, cysteine 497–cysteine 520, cysteine 506–cysteine 539, cysteine 533–cysteine 544, cysteine 567–cysteine 604, cysteine 571–cysteine 609, and cysteine 582–cysteine 594. Residue histidine 402 participates in Zn(2+) binding. Residue glutamate 403 is part of the active site. Zn(2+) is bound by residues histidine 406 and histidine 412. One can recognise a Disintegrin domain in the interval 474–554 (QLPGLHYSMN…IWLTPDILKR (81 aa)). In terms of domain architecture, TSP type-1 1 spans 555-610 (DGNWGAWSPFGSCSRTCGTGVKFRTRQCDNPHPANGGRTCSGLAYDFQLCNSQDCP). The short motif at 685-687 (RGD) is the Cell attachment site element. The spacer stretch occupies residues 717 to 845 (KVVKGTFSRS…NVDDNNVLED (129 aa)). TSP type-1 domains follow at residues 848–906 (VGYE…NPQE), 908–968 (SQPV…NREL), and 969–1023 (CPGR…GPCP). 3 N-linked (GlcNAc...) asparagine glycosylation sites follow: asparagine 942, asparagine 943, and asparagine 987. Intrachain disulfides connect cysteine 981-cysteine 1017, cysteine 985-cysteine 1022, and cysteine 996-cysteine 1006. The N-linked (GlcNAc...) asparagine glycan is linked to asparagine 1025. Positions 1053–1091 (SKGRCQGDKSVFCRMEVLSRYCSIPGYNKLCCKSCNPHD) constitute a PLAC domain. N-linked (GlcNAc...) asparagine glycosylation is found at asparagine 1092, asparagine 1139, and asparagine 1144. The disordered stretch occupies residues 1163–1184 (GLEDEVQPPNLIPRRPSPYEKT).

As to quaternary structure, may belong to a multimeric complex. Binds specifically to collagen type XIV. The cofactor is Zn(2+). Post-translationally, the N-terminus is blocked. The precursor is cleaved by a furin endopeptidase. In terms of processing, glycosylated. Can be O-fucosylated by POFUT2 on a serine or a threonine residue found within the consensus sequence C1-X(2)-(S/T)-C2-G of the TSP type-1 repeat domains where C1 and C2 are the first and second cysteine residue of the repeat, respectively. Fucosylated repeats can then be further glycosylated by the addition of a beta-1,3-glucose residue by the glucosyltransferase, B3GALTL. Fucosylation mediates the efficient secretion of ADAMTS family members. Can also be C-glycosylated with one or two mannose molecules on tryptophan residues within the consensus sequence W-X-X-W of the TPRs, and N-glycosylated. These other glycosylations can also facilitate secretion. As to expression, enzymatic activity is detected at high level in all type I collagen-rich tissues such as skin, bones, tendons and aorta and at low level in brain and thymus. The mRNA levels were disproportionately high in heart, liver, retina and muscle.

The protein localises to the secreted. It localises to the extracellular space. Its subcellular location is the extracellular matrix. The catalysed reaction is Cleaves the N-propeptide of collagen chain alpha1(I) at Pro-|-Gln and of alpha1(II) and alpha2(I) at Ala-|-Gln.. In terms of biological role, cleaves the propeptides of type I and II collagen prior to fibril assembly. Does not act on type III collagen. Cleaves lysyl oxidase LOX at a site downstream of its propeptide cleavage site to produce a short LOX form with reduced collagen-binding activity. In Bos taurus (Bovine), this protein is A disintegrin and metalloproteinase with thrombospondin motifs 2 (ADAMTS2).